The chain runs to 733 residues: LMBR1 domain-containing protein 2 homolog A (733 aa).

5 helical membrane passes run 1-21 (MIVI…KILH), 33-53 (VYIS…LVPI), 125-145 (FYFG…SFVL), 163-183 (AYLY…LLAV), and 191-211 (MVGF…IILM). Positions 232–266 (LKHLQFKAVELLNSKKKANEELIATMKVIRRIQEK) form a coiled coil. The next 4 helical transmembrane spans lie at 386 to 406 (AAIV…ALAF), 423 to 443 (VSNI…ALTC), 468 to 488 (SIIF…YNFI), and 513 to 533 (VAPF…VIVC). Disordered regions lie at residues 581-641 (NNIK…TSSA), 649-668 (LKKS…PYEQ), and 674-696 (ESND…TYNA). The segment covering 596 to 619 (DSTSNNPKQIFKSGSTTISKQSPP) has biased composition (polar residues). Low complexity-rich tracts occupy residues 620 to 640 (NLNV…NTSS) and 654 to 664 (NNNNNNNNNNN). The span at 674 to 685 (ESNDFDDDDDIE) shows a compositional bias: acidic residues.

Belongs to the LIMR family.

Its subcellular location is the membrane. This Dictyostelium discoideum (Social amoeba) protein is LMBR1 domain-containing protein 2 homolog A.